The following is a 557-amino-acid chain: Copine-6 (557 aa).

C2 domains follow at residues 1-127 (MSDP…TKPL) and 134-263 (NAGK…MQWD). Residues aspartate 167, aspartate 173, aspartate 229, aspartate 231, and aspartate 237 each contribute to the Ca(2+) site. Residues 244-303 (STFQEMQEGTANPGQEMQWDCINPKYRDKKKHYKSSGTVVLAQCTVEKVHTFLDYIMGGC) are linker region. Residues 306–526 (SFTVAIDFTA…ALAKCVLAEV (221 aa)) enclose the VWFA domain.

It belongs to the copine family. In terms of assembly, interacts (via second C2 domain) with OS9 (via C-terminus); this interaction occurs in a calcium-dependent manner in vitro. May interact with NECAB1. It depends on Ca(2+) as a cofactor.

The protein resides in the cytoplasm. It localises to the cell membrane. The protein localises to the endosome. It is found in the cytoplasmic vesicle. Its subcellular location is the clathrin-coated vesicle. The protein resides in the perikaryon. It localises to the cell projection. The protein localises to the dendrite. In terms of biological role, calcium-dependent phospholipid-binding protein that plays a role in calcium-mediated intracellular processes. Binds phospholipid membranes in a calcium-dependent manner. Plays a role in dendrite formation by melanocytes. This Bos taurus (Bovine) protein is Copine-6.